A 103-amino-acid polypeptide reads, in one-letter code: Nucleoid-associated protein SUN_2278 (103 aa).

Belongs to the YbaB/EbfC family. As to quaternary structure, homodimer.

Its subcellular location is the cytoplasm. The protein resides in the nucleoid. Its function is as follows. Binds to DNA and alters its conformation. May be involved in regulation of gene expression, nucleoid organization and DNA protection. In Sulfurovum sp. (strain NBC37-1), this protein is Nucleoid-associated protein SUN_2278.